We begin with the raw amino-acid sequence, 568 residues long: Putative DEAD-box RNA helicase HEL64 (568 aa).

The interval 1-34 (MEETYSPFTGRQGQYNQGYNGGGRRDSRGGMGER) is disordered. Residues 23 to 34 (GRRDSRGGMGER) show a composition bias toward basic and acidic residues. The Q motif motif lies at 102–130 (FDHLCGIVPPYLLKKLTAQNFTAPTPVQA). Residues 133–307 (WPVLLSGRDL…AEFQKQWIRI (175 aa)) form the Helicase ATP-binding domain. 146-153 (AKTGSGKT) contacts ATP. The DEAD box signature appears at 255–258 (DEAD). Residues 335–483 (ELRKLMQEHR…EIPDWMIEWN (149 aa)) form the Helicase C-terminal domain.

Belongs to the DEAD box helicase family. DDX5/DBP2 subfamily.

It is found in the nucleus. The enzyme catalyses ATP + H2O = ADP + phosphate + H(+). This is Putative DEAD-box RNA helicase HEL64 (HEL64) from Trypanosoma brucei brucei.